The primary structure comprises 1067 residues: Isoleucine--tRNA ligase (1067 aa).

The 'HIGH' region motif lies at 49–59; it reads PYVSGAIHLGT. The short motif at 625-629 is the 'KMSKS' region element; it reads KMSKS. Lys628 is an ATP binding site.

The protein belongs to the class-I aminoacyl-tRNA synthetase family. IleS type 2 subfamily. In terms of assembly, monomer. Zn(2+) is required as a cofactor.

It is found in the cytoplasm. It catalyses the reaction tRNA(Ile) + L-isoleucine + ATP = L-isoleucyl-tRNA(Ile) + AMP + diphosphate. Catalyzes the attachment of isoleucine to tRNA(Ile). As IleRS can inadvertently accommodate and process structurally similar amino acids such as valine, to avoid such errors it has two additional distinct tRNA(Ile)-dependent editing activities. One activity is designated as 'pretransfer' editing and involves the hydrolysis of activated Val-AMP. The other activity is designated 'posttransfer' editing and involves deacylation of mischarged Val-tRNA(Ile). This Pyrococcus abyssi (strain GE5 / Orsay) protein is Isoleucine--tRNA ligase.